A 427-amino-acid chain; its full sequence is Probable fatty acid methyltransferase Rv3720 (427 aa).

S-adenosyl-L-methionine contacts are provided by residues 167–168, 202–210, and 227–232; these read YT, LLDVGCGWG, and TLSAEQ.

The protein belongs to the CFA/CMAS family.

May be a S-adenosylmethionine-dependent methyltransferase involved in fatty acid metabolism. The sequence is that of Probable fatty acid methyltransferase Rv3720 from Mycobacterium tuberculosis (strain ATCC 25618 / H37Rv).